The chain runs to 210 residues: ATP-dependent Clp protease proteolytic subunit (210 aa).

Serine 106 serves as the catalytic Nucleophile. The active site involves histidine 131.

This sequence belongs to the peptidase S14 family. As to quaternary structure, fourteen ClpP subunits assemble into 2 heptameric rings which stack back to back to give a disk-like structure with a central cavity, resembling the structure of eukaryotic proteasomes.

The protein localises to the cytoplasm. The enzyme catalyses Hydrolysis of proteins to small peptides in the presence of ATP and magnesium. alpha-casein is the usual test substrate. In the absence of ATP, only oligopeptides shorter than five residues are hydrolyzed (such as succinyl-Leu-Tyr-|-NHMec, and Leu-Tyr-Leu-|-Tyr-Trp, in which cleavage of the -Tyr-|-Leu- and -Tyr-|-Trp bonds also occurs).. In terms of biological role, cleaves peptides in various proteins in a process that requires ATP hydrolysis. Has a chymotrypsin-like activity. Plays a major role in the degradation of misfolded proteins. The sequence is that of ATP-dependent Clp protease proteolytic subunit from Bartonella henselae (strain ATCC 49882 / DSM 28221 / CCUG 30454 / Houston 1) (Rochalimaea henselae).